The primary structure comprises 179 residues: Small ribosomal subunit protein uS5 (179 aa).

The S5 DRBM domain occupies 22–85; sequence MIEKLVAVNR…EYARKRMSNV (64 aa).

Belongs to the universal ribosomal protein uS5 family. In terms of assembly, part of the 30S ribosomal subunit. Contacts proteins S4 and S8.

In terms of biological role, with S4 and S12 plays an important role in translational accuracy. Located at the back of the 30S subunit body where it stabilizes the conformation of the head with respect to the body. The protein is Small ribosomal subunit protein uS5 of Xylella fastidiosa (strain M23).